Here is a 393-residue protein sequence, read N- to C-terminus: NAD(P)H-quinone oxidoreductase subunit H, chloroplastic (393 aa).

Belongs to the complex I 49 kDa subunit family. As to quaternary structure, NDH is composed of at least 16 different subunits, 5 of which are encoded in the nucleus.

Its subcellular location is the plastid. The protein localises to the chloroplast thylakoid membrane. It catalyses the reaction a plastoquinone + NADH + (n+1) H(+)(in) = a plastoquinol + NAD(+) + n H(+)(out). It carries out the reaction a plastoquinone + NADPH + (n+1) H(+)(in) = a plastoquinol + NADP(+) + n H(+)(out). Its function is as follows. NDH shuttles electrons from NAD(P)H:plastoquinone, via FMN and iron-sulfur (Fe-S) centers, to quinones in the photosynthetic chain and possibly in a chloroplast respiratory chain. The immediate electron acceptor for the enzyme in this species is believed to be plastoquinone. Couples the redox reaction to proton translocation, and thus conserves the redox energy in a proton gradient. The polypeptide is NAD(P)H-quinone oxidoreductase subunit H, chloroplastic (Hordeum vulgare (Barley)).